Here is a 189-residue protein sequence, read N- to C-terminus: Coatomer subunit zeta (189 aa).

It belongs to the adaptor complexes small subunit family. Oligomeric complex that consists of at least the alpha, beta, beta', gamma, delta, epsilon and zeta subunits.

The protein resides in the cytoplasm. It localises to the golgi apparatus membrane. The protein localises to the cytoplasmic vesicle. Its subcellular location is the COPI-coated vesicle membrane. The coatomer is a cytosolic protein complex that binds to dilysine motifs and reversibly associates with Golgi non-clathrin-coated vesicles, which further mediate biosynthetic protein transport from the ER, via the Golgi up to the trans Golgi network. Coatomer complex is required for budding from Golgi membranes, and is essential for the retrograde Golgi-to-ER transport of dilysine-tagged proteins. The zeta subunit may be involved in regulating the coat assembly and, hence, the rate of biosynthetic protein transport due to its association-dissociation properties with the coatomer complex. This Saccharomyces cerevisiae (strain ATCC 204508 / S288c) (Baker's yeast) protein is Coatomer subunit zeta (RET3).